Reading from the N-terminus, the 510-residue chain is Lysine--tRNA ligase (510 aa).

Positions 420 and 427 each coordinate Mg(2+).

This sequence belongs to the class-II aminoacyl-tRNA synthetase family. As to quaternary structure, homodimer. It depends on Mg(2+) as a cofactor.

Its subcellular location is the cytoplasm. It catalyses the reaction tRNA(Lys) + L-lysine + ATP = L-lysyl-tRNA(Lys) + AMP + diphosphate. The protein is Lysine--tRNA ligase of Psychrobacter sp. (strain PRwf-1).